The following is a 150-amino-acid chain: Large ribosomal subunit protein bL9 (150 aa).

It belongs to the bacterial ribosomal protein bL9 family.

Functionally, binds to the 23S rRNA. This is Large ribosomal subunit protein bL9 from Pseudarthrobacter chlorophenolicus (strain ATCC 700700 / DSM 12829 / CIP 107037 / JCM 12360 / KCTC 9906 / NCIMB 13794 / A6) (Arthrobacter chlorophenolicus).